We begin with the raw amino-acid sequence, 181 residues long: MWLTVKLLLGRRCLLQVSENEKVFMLKRLVSKQLHVPEKQQRLLFRGQVLADNKRLSDYCIGPNSTLNVIIRPLEKTSPETPSQPRSQSLWPQLNQILLKHFSPQDAENVLRRLREDHRKSLQRMNLDDLERISKVLVPEGKHSGATGSTRESKGDMEPRRNMKCNLAHKDGFKREKSPGK.

The Ubiquitin-like domain maps to 1–76 (MWLTVKLLLG…LNVIIRPLEK (76 aa)). The interval 139 to 181 (PEGKHSGATGSTRESKGDMEPRRNMKCNLAHKDGFKREKSPGK) is disordered. 2 stretches are compositionally biased toward basic and acidic residues: residues 151-161 (RESKGDMEPRR) and 168-181 (AHKDGFKREKSPGK).

The protein resides in the cytoplasm. In Monodelphis domestica (Gray short-tailed opossum), this protein is Ubiquitin-like protein 4B (UBL4B).